We begin with the raw amino-acid sequence, 199 residues long: Photosystem I reaction center subunit XI (199 aa).

A run of 2 helical transmembrane segments spans residues 108–128 and 165–185; these read VTAGLLSAIGAVHIMTALLVL and FWLGGCGGAVFAWLLVGTLHL.

This sequence belongs to the PsaL family.

It is found in the cellular thylakoid membrane. This chain is Photosystem I reaction center subunit XI, found in Prochlorococcus marinus (strain MIT 9215).